The following is a 663-amino-acid chain: GPI mannosyltransferase 3 (663 aa).

Residues 1 to 11 (MPMSARSRRSN) show a composition bias toward basic residues. The tract at residues 1-44 (MPMSARSRRSNPRLPPSPSSSSSSDAVRASPHSSPPSRLRPPSA) is disordered. Low complexity predominate over residues 19-42 (SSSSSSDAVRASPHSSPPSRLRPP). The next 8 membrane-spanning stretches (helical) occupy residues 47 to 67 (DVSS…ALTV), 110 to 130 (PLIF…LGLT), 137 to 157 (LLIA…DFYT), 226 to 246 (VLAV…FPPL), 269 to 289 (YASQ…LVGL), 304 to 324 (GSIL…LSVI), 335 to 355 (LLPA…IPAL), and 367 to 387 (LTLI…TLFH). The disordered stretch occupies residues 492–512 (HIPRRPSYATPPSSQRQPTQL). A compositionally biased stretch (polar residues) spans 501–511 (TPPSSQRQPTQ).

Belongs to the glycosyltransferase 22 family. PIGB subfamily.

Its subcellular location is the endoplasmic reticulum membrane. It participates in glycolipid biosynthesis; glycosylphosphatidylinositol-anchor biosynthesis. Functionally, mannosyltransferase involved in glycosylphosphatidylinositol-anchor biosynthesis. Transfers the third mannose to Man2-GlcN-acyl-PI during GPI precursor assembly. This Emericella nidulans (strain FGSC A4 / ATCC 38163 / CBS 112.46 / NRRL 194 / M139) (Aspergillus nidulans) protein is GPI mannosyltransferase 3 (gpi10).